The primary structure comprises 119 residues: MVYIQNTHLNDKKQIYQACAQIYGLGHHHCLQICDVLGVSPETRLGMLSTGQHTLLAQIITQNYDTGSDVRRFTRQNIQRLVNIHSYRGYRHIQGLPVRGQRSHGNARTVRKLKNVIKI.

This sequence belongs to the universal ribosomal protein uS13 family. In terms of assembly, part of the small ribosomal subunit.

Its subcellular location is the mitochondrion. Located at the top of the head of the small subunit, it contacts several helices of the small subunit rRNA. The polypeptide is Small ribosomal subunit protein uS13m (RPS13) (Prototheca wickerhamii).